The sequence spans 427 residues: Serine--tRNA ligase (427 aa).

233-235 (TGE) contributes to the L-serine binding site. Position 264–266 (264–266 (RSE)) interacts with ATP. Glu-287 provides a ligand contact to L-serine. 351-354 (EVSS) provides a ligand contact to ATP. Residue Ser-387 participates in L-serine binding.

This sequence belongs to the class-II aminoacyl-tRNA synthetase family. Type-1 seryl-tRNA synthetase subfamily. As to quaternary structure, homodimer. The tRNA molecule binds across the dimer.

The protein localises to the cytoplasm. The enzyme catalyses tRNA(Ser) + L-serine + ATP = L-seryl-tRNA(Ser) + AMP + diphosphate + H(+). It carries out the reaction tRNA(Sec) + L-serine + ATP = L-seryl-tRNA(Sec) + AMP + diphosphate + H(+). It functions in the pathway aminoacyl-tRNA biosynthesis; selenocysteinyl-tRNA(Sec) biosynthesis; L-seryl-tRNA(Sec) from L-serine and tRNA(Sec): step 1/1. Functionally, catalyzes the attachment of serine to tRNA(Ser). Is also able to aminoacylate tRNA(Sec) with serine, to form the misacylated tRNA L-seryl-tRNA(Sec), which will be further converted into selenocysteinyl-tRNA(Sec). This chain is Serine--tRNA ligase, found in Buchnera aphidicola subsp. Acyrthosiphon pisum (strain 5A).